Here is a 217-residue protein sequence, read N- to C-terminus: Protein dao-4 (217 aa).

Residues 1–21 form the signal peptide; that stretch reads MKIALYSILLITVCYLSSTDA.

It localises to the nucleus. It is found in the secreted. Probably acts downstream of the Wnt signaling pathway. This Caenorhabditis elegans protein is Protein dao-4.